We begin with the raw amino-acid sequence, 88 residues long: Small ribosomal subunit protein bS16c (88 aa).

Belongs to the bacterial ribosomal protein bS16 family.

It is found in the plastid. Its subcellular location is the chloroplast. The chain is Small ribosomal subunit protein bS16c from Atropa belladonna (Belladonna).